We begin with the raw amino-acid sequence, 637 residues long: Threonine--tRNA ligase (637 aa).

One can recognise a TGS domain in the interval Met1–Thr61. A catalytic region spans residues Asp242 to Pro533. Zn(2+) contacts are provided by Cys333, His384, and His510.

This sequence belongs to the class-II aminoacyl-tRNA synthetase family. In terms of assembly, homodimer. Requires Zn(2+) as cofactor.

Its subcellular location is the cytoplasm. It carries out the reaction tRNA(Thr) + L-threonine + ATP = L-threonyl-tRNA(Thr) + AMP + diphosphate + H(+). Catalyzes the attachment of threonine to tRNA(Thr) in a two-step reaction: L-threonine is first activated by ATP to form Thr-AMP and then transferred to the acceptor end of tRNA(Thr). Also edits incorrectly charged L-seryl-tRNA(Thr). This chain is Threonine--tRNA ligase, found in Teredinibacter turnerae (strain ATCC 39867 / T7901).